Consider the following 219-residue polypeptide: Small ribosomal subunit protein uS3 (219 aa).

The KH type-2 domain maps to 38–106 (IREYINVRLK…RVHINILEVK (69 aa)).

It belongs to the universal ribosomal protein uS3 family. As to quaternary structure, part of the 30S ribosomal subunit. Forms a tight complex with proteins S10 and S14.

In terms of biological role, binds the lower part of the 30S subunit head. Binds mRNA in the 70S ribosome, positioning it for translation. The protein is Small ribosomal subunit protein uS3 of Bacillus thuringiensis (strain Al Hakam).